Here is a 364-residue protein sequence, read N- to C-terminus: Lysophosphatidic acid receptor 1 (364 aa).

Over 1–50 the chain is Extracellular; sequence MAAAFTSSPVVSQPQFTAMNEQQCFSNESIAFFYNRSGKYLATEWNTVTK. 2 disulfides stabilise this stretch: Cys-24/Cys-190 and Cys-188/Cys-195. N-linked (GlcNAc...) asparagine glycans are attached at residues Asn-27 and Asn-35. A 1-acyl-sn-glycero-3-phosphate is bound at residue Lys-39. Residues 51-75 form a helical membrane-spanning segment; it reads LVMGLGITVCIFIMLANLLVMVAIY. Over 76–83 the chain is Cytoplasmic; it reads VNRRFHFP. The chain crosses the membrane as a helical span at residues 84 to 107; it reads IYYLMANLAAADFFAGLAYFYLMF. At 108–121 the chain is on the extracellular side; the sequence is NTGPNTRRLTVSTW. The chain crosses the membrane as a helical span at residues 122–144; the sequence is LLRQGLIDTSLTVSVANLLAIAI. 124-129 lines the a 1-acyl-sn-glycero-3-phosphate pocket; sequence RQGLID. Residues 145–163 are Cytoplasmic-facing; it reads ERHITVFRMQLHARMSNRR. Residues 164 to 184 traverse the membrane as a helical segment; sequence VVVVIVVIWTMAIVMGAIPSV. Residues 185–204 lie on the Extracellular side of the membrane; that stretch reads GWNCICDIENCSNMAPLYSD. A helical membrane pass occupies residues 205–225; sequence SYLVFWAIFNLVTFVVMVVLY. Trp-210 is a binding site for a 1-acyl-sn-glycero-3-phosphate. Over 226-255 the chain is Cytoplasmic; that stretch reads AHIFGYVRQRTMRMSRHSSGPRRNRDTMMS. A helical transmembrane segment spans residues 256–280; that stretch reads LLKTVVIVLGAFIICWTPGLVLLLL. Residues 281-294 lie on the Extracellular side of the membrane; the sequence is DVCCPQCDVLAYEK. Cys-284 and Cys-287 are oxidised to a cystine. A helical membrane pass occupies residues 295–315; the sequence is FFLLLAEFNSAMNPIIYSYRD. The Cytoplasmic segment spans residues 316-364; sequence KEMSATFRQILCCQRSENTSGPTEGSDRSASSLNHTILAGVHSNDHSVV. Ser-341 is subject to Phosphoserine. Position 351 is a phosphothreonine (Thr-351).

The protein belongs to the G-protein coupled receptor 1 family. As to quaternary structure, interacts with RALA and GRK2. Interacts with GNAQ and GNA13. Interacts with CD14; the interaction is enhanced by exposure to bacterial lipopolysaccharide (LPS). In terms of processing, N-glycosylated.

It localises to the cell surface. The protein localises to the cell membrane. It is found in the endosome. Receptor for lysophosphatidic acid (LPA). Plays a role in the reorganization of the actin cytoskeleton, cell migration, differentiation and proliferation, and thereby contributes to the responses to tissue damage and infectious agents. Activates downstream signaling cascades via the G(i)/G(o), G(12)/G(13), and G(q) families of heteromeric G proteins. Signaling inhibits adenylyl cyclase activity and decreases cellular cAMP levels. Signaling triggers an increase of cytoplasmic Ca(2+) levels. Activates RALA; this leads to the activation of phospholipase C (PLC) and the formation of inositol 1,4,5-trisphosphate. Signaling mediates activation of down-stream MAP kinases. Contributes to the regulation of cell shape. Promotes Rho-dependent reorganization of the actin cytoskeleton in neuronal cells and neurite retraction. Promotes the activation of Rho and the formation of actin stress fibers. Promotes formation of lamellipodia at the leading edge of migrating cells via activation of RAC1. Through its function as LPA receptor, plays a role in chemotaxis and cell migration, including responses to injury and wounding. Plays a role in triggering inflammation in response to bacterial lipopolysaccharide (LPS) via its interaction with CD14. Promotes cell proliferation in response to LPA. Inhibits the intracellular ciliogenesis pathway in response to LPA and through AKT1 activation. Required for normal skeleton development. May play a role in osteoblast differentiation. Required for normal brain development. Required for normal proliferation, survival and maturation of newly formed neurons in the adult dentate gyrus. Plays a role in pain perception and in the initiation of neuropathic pain. The sequence is that of Lysophosphatidic acid receptor 1 (LPAR1) from Bos taurus (Bovine).